The sequence spans 308 residues: tRNA pseudouridine synthase B (308 aa).

Aspartate 48 serves as the catalytic Nucleophile.

The protein belongs to the pseudouridine synthase TruB family. Type 1 subfamily.

The enzyme catalyses uridine(55) in tRNA = pseudouridine(55) in tRNA. Its function is as follows. Responsible for synthesis of pseudouridine from uracil-55 in the psi GC loop of transfer RNAs. This Histophilus somni (strain 129Pt) (Haemophilus somnus) protein is tRNA pseudouridine synthase B.